Consider the following 315-residue polypeptide: 4-hydroxy-3-methylbut-2-enyl diphosphate reductase (315 aa).

Cysteine 12 serves as a coordination point for [4Fe-4S] cluster. (2E)-4-hydroxy-3-methylbut-2-enyl diphosphate is bound by residues histidine 43 and histidine 81. Residues histidine 43 and histidine 81 each contribute to the dimethylallyl diphosphate site. Positions 43 and 81 each coordinate isopentenyl diphosphate. Residue cysteine 103 coordinates [4Fe-4S] cluster. Histidine 131 contacts (2E)-4-hydroxy-3-methylbut-2-enyl diphosphate. Histidine 131 contributes to the dimethylallyl diphosphate binding site. Isopentenyl diphosphate is bound at residue histidine 131. The active-site Proton donor is the glutamate 133. Threonine 170 serves as a coordination point for (2E)-4-hydroxy-3-methylbut-2-enyl diphosphate. Residue cysteine 198 participates in [4Fe-4S] cluster binding. (2E)-4-hydroxy-3-methylbut-2-enyl diphosphate is bound by residues serine 226, asparagine 228, and serine 271. Residues serine 226, asparagine 228, and serine 271 each contribute to the dimethylallyl diphosphate site. Serine 226, asparagine 228, and serine 271 together coordinate isopentenyl diphosphate.

This sequence belongs to the IspH family. [4Fe-4S] cluster serves as cofactor.

The enzyme catalyses isopentenyl diphosphate + 2 oxidized [2Fe-2S]-[ferredoxin] + H2O = (2E)-4-hydroxy-3-methylbut-2-enyl diphosphate + 2 reduced [2Fe-2S]-[ferredoxin] + 2 H(+). It carries out the reaction dimethylallyl diphosphate + 2 oxidized [2Fe-2S]-[ferredoxin] + H2O = (2E)-4-hydroxy-3-methylbut-2-enyl diphosphate + 2 reduced [2Fe-2S]-[ferredoxin] + 2 H(+). It participates in isoprenoid biosynthesis; dimethylallyl diphosphate biosynthesis; dimethylallyl diphosphate from (2E)-4-hydroxy-3-methylbutenyl diphosphate: step 1/1. The protein operates within isoprenoid biosynthesis; isopentenyl diphosphate biosynthesis via DXP pathway; isopentenyl diphosphate from 1-deoxy-D-xylulose 5-phosphate: step 6/6. Its function is as follows. Catalyzes the conversion of 1-hydroxy-2-methyl-2-(E)-butenyl 4-diphosphate (HMBPP) into a mixture of isopentenyl diphosphate (IPP) and dimethylallyl diphosphate (DMAPP). Acts in the terminal step of the DOXP/MEP pathway for isoprenoid precursor biosynthesis. The protein is 4-hydroxy-3-methylbut-2-enyl diphosphate reductase of Geobacillus sp. (strain WCH70).